We begin with the raw amino-acid sequence, 319 residues long: Putative replication factor C small subunit R395 (319 aa).

45–52 (GSPGVGKT) is an ATP binding site.

Belongs to the activator 1 small subunits family. RfcS subfamily.

Part of the RFC clamp loader complex which loads the PCNA sliding clamp onto DNA. In Acanthamoeba polyphaga mimivirus (APMV), this protein is Putative replication factor C small subunit R395.